The chain runs to 196 residues: ATP-dependent Clp protease proteolytic subunit (196 aa).

Catalysis depends on Ser-101, which acts as the Nucleophile. Residue His-126 is part of the active site.

Belongs to the peptidase S14 family. In terms of assembly, component of the chloroplastic Clp protease core complex.

The protein localises to the plastid. It is found in the chloroplast stroma. It catalyses the reaction Hydrolysis of proteins to small peptides in the presence of ATP and magnesium. alpha-casein is the usual test substrate. In the absence of ATP, only oligopeptides shorter than five residues are hydrolyzed (such as succinyl-Leu-Tyr-|-NHMec, and Leu-Tyr-Leu-|-Tyr-Trp, in which cleavage of the -Tyr-|-Leu- and -Tyr-|-Trp bonds also occurs).. Cleaves peptides in various proteins in a process that requires ATP hydrolysis. Has a chymotrypsin-like activity. Plays a major role in the degradation of misfolded proteins. The polypeptide is ATP-dependent Clp protease proteolytic subunit (Eucalyptus globulus subsp. globulus (Tasmanian blue gum)).